We begin with the raw amino-acid sequence, 283 residues long: 4-diphosphocytidyl-2-C-methyl-D-erythritol kinase (283 aa).

K10 is a catalytic residue. 95–105 (PVAAGLGGGSS) contacts ATP. The active site involves D137.

This sequence belongs to the GHMP kinase family. IspE subfamily.

The enzyme catalyses 4-CDP-2-C-methyl-D-erythritol + ATP = 4-CDP-2-C-methyl-D-erythritol 2-phosphate + ADP + H(+). The protein operates within isoprenoid biosynthesis; isopentenyl diphosphate biosynthesis via DXP pathway; isopentenyl diphosphate from 1-deoxy-D-xylulose 5-phosphate: step 3/6. Functionally, catalyzes the phosphorylation of the position 2 hydroxy group of 4-diphosphocytidyl-2C-methyl-D-erythritol. This Pediococcus pentosaceus (strain ATCC 25745 / CCUG 21536 / LMG 10740 / 183-1w) protein is 4-diphosphocytidyl-2-C-methyl-D-erythritol kinase.